The primary structure comprises 359 residues: Protein Wnt-5b (359 aa).

An N-terminal signal peptide occupies residues 1-17 (MPSLLLLFTAALLSSWA). Cys83 and Cys94 are oxidised to a cystine. N-linked (GlcNAc...) asparagine glycans are attached at residues Asn93 and Asn99. Disulfide bonds link Cys133-Cys141, Cys143-Cys161, Cys217-Cys231, Cys219-Cys226, Cys288-Cys319, Cys304-Cys314, Cys318-Cys358, Cys334-Cys349, Cys336-Cys346, and Cys341-Cys342. Ser223 is lipidated: O-palmitoleoyl serine; by PORCN. Asn291 and Asn305 each carry an N-linked (GlcNAc...) asparagine glycan.

This sequence belongs to the Wnt family. In terms of assembly, interacts with PORCN. Post-translationally, palmitoleoylation is required for efficient binding to frizzled receptors. Depalmitoleoylation leads to Wnt signaling pathway inhibition.

Its subcellular location is the secreted. It is found in the extracellular space. The protein localises to the extracellular matrix. In terms of biological role, ligand for members of the frizzled family of seven transmembrane receptors. Probable developmental protein. May be a signaling molecule which affects the development of discrete regions of tissues. Is likely to signal over only few cell diameters. This Pongo abelii (Sumatran orangutan) protein is Protein Wnt-5b (WNT5B).